The sequence spans 66 residues: COP-associated protein (66 aa).

The region spanning 1–66 is the HMA domain; the sequence is MKVTFQVPSI…ALLDAGQEVV (66 aa). 2 residues coordinate Cu cation: Cys12 and Cys15.

Its function is as follows. Part of a cation-transporting system which is associated with copper export out of the H.pylori cells. The protein is COP-associated protein (copP) of Helicobacter pylori (strain J99 / ATCC 700824) (Campylobacter pylori J99).